Consider the following 24-residue polypeptide: Humanin-like 7 (24 aa).

The protein belongs to the humanin family. As to expression, expressed in testis.

It localises to the secreted. Its subcellular location is the cytoplasm. Its function is as follows. Plays a role as a neuroprotective and antiapoptotic factor. The protein is Humanin-like 7 of Homo sapiens (Human).